The following is a 689-amino-acid chain: DNA ligase (689 aa).

NAD(+) is bound by residues 51–55, 100–101, and Glu-129; these read DSEYD and SL. Catalysis depends on Lys-131, which acts as the N6-AMP-lysine intermediate. NAD(+) is bound by residues Arg-152, Glu-189, Lys-308, and Lys-332. Zn(2+) is bound by residues Cys-426, Cys-429, Cys-444, and Cys-450. One can recognise a BRCT domain in the interval 609–689; the sequence is ADEQPLKGQT…ELLALLAANR (81 aa).

Belongs to the NAD-dependent DNA ligase family. LigA subfamily. Mg(2+) is required as a cofactor. Mn(2+) serves as cofactor.

It catalyses the reaction NAD(+) + (deoxyribonucleotide)n-3'-hydroxyl + 5'-phospho-(deoxyribonucleotide)m = (deoxyribonucleotide)n+m + AMP + beta-nicotinamide D-nucleotide.. In terms of biological role, DNA ligase that catalyzes the formation of phosphodiester linkages between 5'-phosphoryl and 3'-hydroxyl groups in double-stranded DNA using NAD as a coenzyme and as the energy source for the reaction. It is essential for DNA replication and repair of damaged DNA. The polypeptide is DNA ligase (Shewanella oneidensis (strain ATCC 700550 / JCM 31522 / CIP 106686 / LMG 19005 / NCIMB 14063 / MR-1)).